A 209-amino-acid chain; its full sequence is N-(5'-phosphoribosyl)anthranilate isomerase (209 aa).

It belongs to the TrpF family.

The enzyme catalyses N-(5-phospho-beta-D-ribosyl)anthranilate = 1-(2-carboxyphenylamino)-1-deoxy-D-ribulose 5-phosphate. It participates in amino-acid biosynthesis; L-tryptophan biosynthesis; L-tryptophan from chorismate: step 3/5. The sequence is that of N-(5'-phosphoribosyl)anthranilate isomerase from Erythrobacter litoralis (strain HTCC2594).